Here is a 116-residue protein sequence, read N- to C-terminus: Large ribosomal subunit protein bL17 (116 aa).

The protein belongs to the bacterial ribosomal protein bL17 family. Part of the 50S ribosomal subunit. Contacts protein L32.

The polypeptide is Large ribosomal subunit protein bL17 (Chloroflexus aggregans (strain MD-66 / DSM 9485)).